The following is a 259-amino-acid chain: Thiazole synthase (259 aa).

The active-site Schiff-base intermediate with DXP is Lys99. 1-deoxy-D-xylulose 5-phosphate contacts are provided by residues Gly161, 187-188 (AG), and 209-210 (NT).

The protein belongs to the ThiG family. Homotetramer. Forms heterodimers with either ThiH or ThiS.

It localises to the cytoplasm. It carries out the reaction [ThiS sulfur-carrier protein]-C-terminal-Gly-aminoethanethioate + 2-iminoacetate + 1-deoxy-D-xylulose 5-phosphate = [ThiS sulfur-carrier protein]-C-terminal Gly-Gly + 2-[(2R,5Z)-2-carboxy-4-methylthiazol-5(2H)-ylidene]ethyl phosphate + 2 H2O + H(+). It functions in the pathway cofactor biosynthesis; thiamine diphosphate biosynthesis. Functionally, catalyzes the rearrangement of 1-deoxy-D-xylulose 5-phosphate (DXP) to produce the thiazole phosphate moiety of thiamine. Sulfur is provided by the thiocarboxylate moiety of the carrier protein ThiS. In vitro, sulfur can be provided by H(2)S. The protein is Thiazole synthase of Nitratiruptor sp. (strain SB155-2).